A 182-amino-acid chain; its full sequence is Adenine phosphoribosyltransferase (182 aa).

It belongs to the purine/pyrimidine phosphoribosyltransferase family. Homodimer.

The protein resides in the cytoplasm. The catalysed reaction is AMP + diphosphate = 5-phospho-alpha-D-ribose 1-diphosphate + adenine. Its pathway is purine metabolism; AMP biosynthesis via salvage pathway; AMP from adenine: step 1/1. Functionally, catalyzes a salvage reaction resulting in the formation of AMP, that is energically less costly than de novo synthesis. This chain is Adenine phosphoribosyltransferase, found in Pseudomonas putida (strain GB-1).